A 92-amino-acid polypeptide reads, in one-letter code: Phospholemman (92 aa).

Residues 1–20 (MASLSHILVLCVGLLAMVNA) form the signal peptide. Topologically, residues 21-35 (EAPQEHDPFTYDYQS) are extracellular. The chain crosses the membrane as a helical span at residues 36 to 56 (LRIGGLIIAGILFILGILIVL). Topologically, residues 57–92 (SRRCRCKFNQQQRTGEPDEEEGTFRSSIRRLSTRRR) are cytoplasmic. The S-palmitoyl cysteine moiety is linked to residue Cys60. S-glutathionyl cysteine; alternate is present on Cys62. The S-palmitoyl cysteine; alternate moiety is linked to residue Cys62. Residues 65–92 (NQQQRTGEPDEEEGTFRSSIRRLSTRRR) are disordered. Thr79 bears the Phosphothreonine mark. Ser82 bears the Phosphoserine mark. Ser83 is modified (phosphoserine; by PKA and PKC). Basic residues predominate over residues 83–92 (SIRRLSTRRR). The residue at position 88 (Ser88) is a Phosphoserine; by PKA. A Phosphothreonine; by PKC modification is found at Thr89.

It belongs to the FXYD family. As to quaternary structure, homotetramer. Monomer. Regulatory subunit of the sodium/potassium-transporting ATPase (NKA) which is composed of a catalytic alpha subunit, an auxiliary non-catalytic beta subunit and an additional regulatory subunit. The monomeric form associates with NKA while the oligomeric form does not. Interacts with the catalytic alpha-1 subunit ATP1A1. Also interacts with the catalytic alpha-2 and alpha-3 subunits ATP1A2 and ATP1A3. Very little interaction with ATP1A1, ATP1A2 or ATP1A3 when phosphorylated at Ser-83. Interacts with the non-catalytic beta-1 subunit ATP1B1. Oxidative stress decreases interaction with ATP1A1 but increases interaction with ATP1B1. Post-translationally, major plasma membrane substrate for cAMP-dependent protein kinase (PKA) and protein kinase C (PKC) in several different tissues. Phosphorylated in response to insulin and adrenergic stimulation. Phosphorylation at Ser-88 stimulates sodium/potassium-transporting ATPase activity while the unphosphorylated form inhibits sodium/potassium-transporting ATPase activity. Phosphorylation increases tetramerization, decreases binding to ATP1A1 and reduces inhibition of ATP1A1 activity. Phosphorylation at Ser-83 leads to greatly reduced interaction with ATP1A1, ATP1A2 and ATP1A3. May be phosphorylated by DMPK. In terms of processing, palmitoylation increases half-life and stability and is enhanced upon phosphorylation at Ser-88 by PKA. In the brain, detected in cerebellum and choroid plexus (at protein level).

The protein localises to the cell membrane. Its subcellular location is the sarcolemma. The protein resides in the apical cell membrane. It is found in the membrane. It localises to the caveola. The protein localises to the T-tubule. In terms of biological role, associates with and regulates the activity of the sodium/potassium-transporting ATPase (NKA) which transports Na(+) out of the cell and K(+) into the cell. Inhibits NKA activity in its unphosphorylated state and stimulates activity when phosphorylated. Reduces glutathionylation of the NKA beta-1 subunit ATP1B1, thus reversing glutathionylation-mediated inhibition of ATP1B1. Contributes to female sexual development by maintaining the excitability of neurons which secrete gonadotropin-releasing hormone. This is Phospholemman from Bos taurus (Bovine).